An 844-amino-acid polypeptide reads, in one-letter code: RPA-related protein RADX (844 aa).

Residues 228 to 331 (WHNRKNFPAL…LISTMEICLN (104 aa)) constitute a DNA-binding region (OB). Disordered regions lie at residues 571–609 (PASE…RPMD) and 626–664 (GPTA…TGKS). The span at 572-587 (ASETLQNASPPSTSQA) shows a compositional bias: polar residues. Residues 590–608 (KEGHYHERGSKRSQDDRPM) are compositionally biased toward basic and acidic residues. Over residues 652–662 (SRENSTANATG) the composition is skewed to polar residues.

It is found in the chromosome. Single-stranded DNA-binding protein recruited to replication forks to maintain genome stability. Prevents fork collapse by antagonizing the accumulation of RAD51 at forks to ensure the proper balance of fork remodeling and protection without interfering with the capacity of cells to complete homologous recombination of double-strand breaks. In Rattus norvegicus (Rat), this protein is RPA-related protein RADX.